The following is a 555-amino-acid chain: Methyl-coenzyme M reductase subunit alpha (555 aa).

Residue Q152 participates in coenzyme F430 binding. Coenzyme B contacts are provided by residues R230, 261 to 262, and R275; that span reads KH. Y337 and Y448 together coordinate coenzyme M.

It belongs to the methyl-coenzyme M reductase alpha subunit family. In terms of assembly, MCR is a hexamer of two alpha, two beta, and two gamma chains, forming a dimer of heterotrimers. It depends on coenzyme F430 as a cofactor.

It is found in the cytoplasm. The catalysed reaction is coenzyme B + methyl-coenzyme M = methane + coenzyme M-coenzyme B heterodisulfide. Its pathway is one-carbon metabolism; methyl-coenzyme M reduction; methane from methyl-coenzyme M: step 1/1. In terms of biological role, component of the methyl-coenzyme M reductase (MCR) I that catalyzes the reductive cleavage of methyl-coenzyme M (CoM-S-CH3 or 2-(methylthio)ethanesulfonate) using coenzyme B (CoB or 7-mercaptoheptanoylthreonine phosphate) as reductant which results in the production of methane and the mixed heterodisulfide of CoB and CoM (CoM-S-S-CoB). This is the final step in methanogenesis. In Methanococcus voltae, this protein is Methyl-coenzyme M reductase subunit alpha (mcrA).